The sequence spans 87 residues: Potassium channel toxin TsTXK-beta/Cryptide TyPep-16 (87 aa).

A signal peptide spans 1–19; sequence MERKLALLLILGMVTLASC. The region spanning 53–87 is the BetaSPN-type CS-alpha/beta domain; sequence QFGCPAYEGYCNDHCNDIERKDGECHGFKCKCAKD. 3 cysteine pairs are disulfide-bonded: Cys-56-Cys-77, Cys-63-Cys-82, and Cys-67-Cys-84.

Belongs to the long chain scorpion toxin family. Class 1 subfamily. As to expression, expressed by the venom gland.

The protein localises to the secreted. Functionally, specifically blocks voltage-gated potassium channels Kv4.2/KCND2. When measured at the peak current, the blocking effect of this toxin is about 65% and shows an IC(50)=652 nM. However, when measured at a later moment of the depolarising test pulse (500 ms), a 100% block of the current is observed with an IC(50)=313 nM. This may indicate a preference of the toxin for binding the inactivated state of the channel. The inhibition is completely reversible. In vivo, intraplantar injection into rat paw induces overt nociception (licking and lifting behaviors) and decreases the mechanical nociceptive threshold (hyperalgesia). Furthermore, the hyperalgesia is prolonged when intrathecal injections are performed. Induces discomfort and anxiety in mice, as it moderately diminishes locomotion (but has no effect on rearing behavior). Does not cause hemolysis, mast cell degranulation, LDH release, and does not have antimicrobial activity. Does not cause edema and pain. Its function is as follows. Does not induce hemolytic activity, lactate dehydrogenase (LDH) release from mast cells, mast cell degranulation, and antimicrobial effects. In vivo, injection into mice causes moderate edema formation, but induces very weak or no change in nociceptive sensibility. It also reduces mice locomotion, suggesting an increase in anxiety, but causes no alteration in rearing (standing on hind limbs). The polypeptide is Potassium channel toxin TsTXK-beta/Cryptide TyPep-16 (Tityus serrulatus (Brazilian scorpion)).